The primary structure comprises 942 residues: Ubiquitin carboxyl-terminal hydrolase 33 (942 aa).

The UBP-type zinc-finger motif lies at 37–140; sequence NHCPHLDSVG…PSLPHVRQPH (104 aa). Positions 39, 41, 61, 64, 74, 79, 84, 91, 95, 101, 114, and 117 each coordinate Zn(2+). In terms of domain architecture, USP spans 185–715; that stretch reads TGLKNIGNTC…EAYVLFYRKS (531 aa). Cys194 acts as the Nucleophile in catalysis. The segment at 294-357 is disordered; the sequence is VEEDPQTITT…MLIQDDENNS (64 aa). Positions 315 to 327 are enriched in polar residues; it reads DVDFQSCESCSNS. The residue at position 377 (Ser377) is a Phosphoserine. A compositionally biased stretch (polar residues) spans 419–431; the sequence is DLSTPQILPSNEG. Positions 419-469 are disordered; that stretch reads DLSTPQILPSNEGVNPRLSASPPKSGNLWPGLAPPHKKAQSASPKRKKQHK. Ser439 carries the post-translational modification Phosphoserine. The segment covering 453 to 469 has biased composition (basic residues); the sequence is PHKKAQSASPKRKKQHK. The active-site Proton acceptor is the His673. DUSP domains follow at residues 717-810 and 818-921; these read EEAQ…LYIC and EKIE…RPPV.

It belongs to the peptidase C19 family. USP20/USP33 subfamily. As to quaternary structure, interacts with VHL, leading to its ubiquitination and subsequent degradation. Interacts with ARRB1 and ARRB2. Interacts with ADRB2. Interacts with DIO2. Interacts with ROBO1. Interacts with SELENBP1; in a selenium-dependent manner. Interacts with CCP110. Ubiquitinated via a VHL-dependent pathway for proteasomal degradation. Widely expressed.

It is found in the cytoplasm. The protein resides in the perinuclear region. The protein localises to the cytoskeleton. Its subcellular location is the microtubule organizing center. It localises to the centrosome. It is found in the golgi apparatus. It catalyses the reaction Thiol-dependent hydrolysis of ester, thioester, amide, peptide and isopeptide bonds formed by the C-terminal Gly of ubiquitin (a 76-residue protein attached to proteins as an intracellular targeting signal).. Deubiquitinating enzyme involved in various processes such as centrosome duplication, cellular migration and beta-2 adrenergic receptor/ADRB2 recycling. Involved in regulation of centrosome duplication by mediating deubiquitination of CCP110 in S and G2/M phase, leading to stabilize CCP110 during the period which centrioles duplicate and elongate. Involved in cell migration via its interaction with intracellular domain of ROBO1, leading to regulate the Slit signaling. Plays a role in commissural axon guidance cross the ventral midline of the neural tube in a Slit-dependent manner, possibly by mediating the deubiquitination of ROBO1. Acts as a regulator of G-protein coupled receptor (GPCR) signaling by mediating the deubiquitination of beta-arrestins (ARRB1 and ARRB2) and beta-2 adrenergic receptor (ADRB2). Plays a central role in ADRB2 recycling and resensitization after prolonged agonist stimulation by constitutively binding ADRB2, mediating deubiquitination of ADRB2 and inhibiting lysosomal trafficking of ADRB2. Upon dissociation, it is probably transferred to the translocated beta-arrestins, leading to beta-arrestins deubiquitination and disengagement from ADRB2. This suggests the existence of a dynamic exchange between the ADRB2 and beta-arrestins. Deubiquitinates DIO2, thereby regulating thyroid hormone regulation. Mediates deubiquitination of both 'Lys-48'- and 'Lys-63'-linked polyubiquitin chains. The polypeptide is Ubiquitin carboxyl-terminal hydrolase 33 (USP33) (Homo sapiens (Human)).